The primary structure comprises 212 residues: MNIIIMIIIAYLLGSIQTGLWIGKYFYQVNLRQHGSGNTGTTNTFRILGVKAGIVTLTIDILKGTLATLIPIILGITTVSPFFIGFFAIIGHTFPIFAQFKGGKAVATSAGVLLGFAPSFFLYLLVIFLLTLYLFSMISLSSITVAVVGILSVLIFPLVGFILTDYDWIFTTVVILMALTIIIRHQDNIKRIRKRQENLVPFGLNLSKQKNK.

5 helical membrane-spanning segments follow: residues 3 to 23 (IIIMIIIAYLLGSIQTGLWIG), 70 to 90 (IPIILGITTVSPFFIGFFAII), 110 to 130 (AGVLLGFAPSFFLYLLVIFLL), 143 to 163 (ITVAVVGILSVLIFPLVGFIL), and 164 to 184 (TDYDWIFTTVVILMALTIIIR).

This sequence belongs to the PlsY family. As to quaternary structure, probably interacts with PlsX.

The protein localises to the cell membrane. It catalyses the reaction an acyl phosphate + sn-glycerol 3-phosphate = a 1-acyl-sn-glycero-3-phosphate + phosphate. The protein operates within lipid metabolism; phospholipid metabolism. Its function is as follows. Catalyzes the transfer of an acyl group from acyl-phosphate (acyl-PO(4)) to glycerol-3-phosphate (G3P) to form lysophosphatidic acid (LPA). This enzyme utilizes acyl-phosphate as fatty acyl donor, but not acyl-CoA or acyl-ACP. This chain is Glycerol-3-phosphate acyltransferase, found in Streptococcus agalactiae serotype III (strain NEM316).